We begin with the raw amino-acid sequence, 261 residues long: Secreted RxLR effector protein 154 (261 aa).

The N-terminal stretch at 1 to 18 is a signal peptide; that stretch reads MRRCALLFRLFLISYSCS. A RxLR-dEER motif is present at residues 49–64; that stretch reads RILQADDPEHIRTEER.

This sequence belongs to the RxLR effector family.

It localises to the secreted. The protein localises to the host cell membrane. Its function is as follows. Secreted effector that completely suppresses the host cell death induced by cell death-inducing proteins. In Plasmopara viticola (Downy mildew of grapevine), this protein is Secreted RxLR effector protein 154.